Consider the following 503-residue polypeptide: Putative ribose/galactose/methyl galactoside import ATP-binding protein (503 aa).

2 ABC transporter domains span residues 7–244 (LEMI…VGRE) and 254–498 (VPIG…TGQL). 39–46 (GENGAGKS) provides a ligand contact to ATP.

Belongs to the ABC transporter superfamily. Carbohydrate importer 2 (CUT2) (TC 3.A.1.2) family.

The protein localises to the cell membrane. The enzyme catalyses D-ribose(out) + ATP + H2O = D-ribose(in) + ADP + phosphate + H(+). It carries out the reaction D-galactose(out) + ATP + H2O = D-galactose(in) + ADP + phosphate + H(+). Its function is as follows. Part of an ABC transporter complex involved in carbohydrate import. Could be involved in ribose, galactose and/or methyl galactoside import. Responsible for energy coupling to the transport system. The polypeptide is Putative ribose/galactose/methyl galactoside import ATP-binding protein (Geobacillus kaustophilus (strain HTA426)).